The primary structure comprises 343 residues: MMYNSGNNSRDKLKLLDHLNQMIASHRNSQSSGTNQVYVDDKPITANRFNNAINISGAVITNREPYYASGVPTTVHRTESVFSPQSTNVVPFNGVPIIRGSTVMNNMDCIGSNYNDFKVNGMGSCRNACIADNKCLTWSFDKRNQHCYLKDSASVSCNSNDAYTSGRIQSTFQPTHNVTPVPIHSSSIPTSMPIQLAPRPPTQSVPVQTIPIQTQIPQPPRNPVQPPMSPVQPPISPVQPPISPVQPPISPVPSTPSIKRISTMIPNYIHQEVLGPNRSLNVDSSNACQTACINDDRCASWNFLPQMQDNKNFDRCLLYYGQPTLIGPARGGSHGKIYNQLPY.

This is an uncharacterized protein from Acanthamoeba polyphaga mimivirus (APMV).